A 97-amino-acid chain; its full sequence is Osteocalcin (97 aa).

The signal sequence occupies residues 1-18 (MKTLAFLVLCSLAAICLT). Residues 19–52 (SDASTGSQPASDNPADEGMFVERDQASAVVRQKR) constitute a propeptide that is removed on maturation. A Gla domain is found at 53-93 (AAGQLSLTQLESLREVCELNLACEHMMDTEGIIAAYTAYYG). Ca(2+) is bound by residues E63, E67, E70, and E76. Residues E63, E67, and E70 each carry the 4-carboxyglutamate modification. C69 and C75 are disulfide-bonded.

It belongs to the osteocalcin/matrix Gla protein family. Post-translationally, gamma-carboxyglutamate residues are formed by vitamin K dependent carboxylation by GGCX. These residues are essential for the binding of calcium.

It is found in the secreted. In terms of biological role, the carboxylated form is one of the main organic components of the bone matrix, which constitutes 1-2% of the total bone protein. The carboxylated form binds strongly to apatite and calcium. This chain is Osteocalcin (bglap), found in Sparus aurata (Gilthead sea bream).